The sequence spans 206 residues: Protein GET1 (206 aa).

The Lumenal portion of the chain corresponds to Met-1–Leu-4. The chain crosses the membrane as a helical span at residues Leu-5–Ala-24. At Thr-25–Arg-110 the chain is on the cytoplasmic side. Residues Ala-75–Ser-100 adopt a coiled-coil conformation. Residues Trp-111–Phe-131 form a helical membrane-spanning segment. At Thr-132–Thr-155 the chain is on the lumenal side. Residues Val-156–Val-172 traverse the membrane as a helical segment. Topologically, residues Gly-173–Gln-206 are cytoplasmic.

This sequence belongs to the WRB/GET1 family. As to quaternary structure, interacts with GET3.

Its subcellular location is the endoplasmic reticulum membrane. Its function is as follows. Required for the post-translational delivery of tail-anchored (TA) proteins to the endoplasmic reticulum. Acts as a membrane receptor for soluble GET3, which recognizes and selectively binds the transmembrane domain of TA proteins in the cytosol. In Ajellomyces capsulatus (strain G186AR / H82 / ATCC MYA-2454 / RMSCC 2432) (Darling's disease fungus), this protein is Protein GET1.